Consider the following 504-residue polypeptide: GTPase Obg (504 aa).

Positions 2–159 constitute an Obg domain; that stretch reads SQFVDRVVLH…KDVTLELKSM (158 aa). The tract at residues 68 to 88 is disordered; sequence AERGNNGAGDDRHGARGKDLT. The OBG-type G domain occupies 160–340; sequence ADVGLVGFPS…LRFALMDIVR (181 aa). GTP-binding positions include 166–173, 191–195, 212–215, 292–295, and 321–323; these read GFPSAGKS, FTTLA, DVPG, NKMD, and STV. Serine 173 and threonine 193 together coordinate Mg(2+). An OCT domain is found at 364–444; the sequence is KRKGRFADFE…IGGITFEWDP (81 aa). Positions 449-481 are disordered; it reads GVDQTPAYGRGKDRRLEQTDRVTAEQRKRASQA. Positions 458–476 are enriched in basic and acidic residues; it reads RGKDRRLEQTDRVTAEQRK.

Belongs to the TRAFAC class OBG-HflX-like GTPase superfamily. OBG GTPase family. As to quaternary structure, monomer. It depends on Mg(2+) as a cofactor.

The protein localises to the cytoplasm. An essential GTPase which binds GTP, GDP and possibly (p)ppGpp with moderate affinity, with high nucleotide exchange rates and a fairly low GTP hydrolysis rate. Plays a role in control of the cell cycle, stress response, ribosome biogenesis and in those bacteria that undergo differentiation, in morphogenesis control. This Corynebacterium urealyticum (strain ATCC 43042 / DSM 7109) protein is GTPase Obg.